Reading from the N-terminus, the 291-residue chain is MSALNWKPFVYGGLASITAECGTFPIDLTKTRLQIQGQTNDAKFKEIRYRGMLHALVRIGREEGLKALYSGIAPAMLRQASYGTIKIGTYQSLKRLFIERPEDETLPINVICGILSGVISSTIANPTDVLKIRMQAQSNTIQGGMIGNFMNIYQQEGTRGLWKGVSLTAQRAAIVVGVELPVYDITKKHLILSGLMGDTVYTHFLSSFTCGLAGALASNPVDVVRTRMMNQRVLRDGRCSGYTGTLDCLLQTWKNEGFFALYKGFWPNWLRLGPWNIIFFVTYEQLKKLDL.

Serine 2 carries the N-acetylserine modification. 3 Solcar repeats span residues 7–96, 104–189, and 198–289; these read KPFV…LKRL, ETLP…TKKH, and DTVY…LKKL. Transmembrane regions (helical) follow at residues 9–26, 71–89, 105–124, 164–183, 204–224, and 264–283; these read FVYG…TFPI, GIAP…KIGT, TLPI…STIA, GVSL…LPVY, FLSS…VDVV, and GFWP…FVTY.

It belongs to the mitochondrial carrier (TC 2.A.29) family. Interacts with VDAC1.

The protein resides in the mitochondrion inner membrane. It carries out the reaction sulfite(in) + sulfate(out) = sulfite(out) + sulfate(in). It catalyses the reaction thiosulfate(in) + sulfate(out) = thiosulfate(out) + sulfate(in). The enzyme catalyses sulfate(out) + phosphate(in) = sulfate(in) + phosphate(out). The catalysed reaction is oxalate(in) + sulfate(out) = oxalate(out) + sulfate(in). It carries out the reaction malonate(in) + sulfate(out) = malonate(out) + sulfate(in). It catalyses the reaction maleate(in) + sulfate(out) = maleate(out) + sulfate(in). The enzyme catalyses (S)-malate(in) + sulfate(out) = (S)-malate(out) + sulfate(in). The catalysed reaction is (3S)-citramalate(in) + sulfate(out) = (3S)-citramalate(out) + sulfate(in). It carries out the reaction (3R)-citramalate(in) + sulfate(out) = (3R)-citramalate(out) + sulfate(in). It catalyses the reaction sulfate(out) + succinate(in) = sulfate(in) + succinate(out). The enzyme catalyses (S,S)-tartrate(in) + sulfate(out) = (S,S)-tartrate(out) + sulfate(in). The catalysed reaction is (2R,3R)-tartrate(in) + sulfate(out) = (2R,3R)-tartrate(out) + sulfate(in). It carries out the reaction D-aspartate(in) + sulfate(out) = D-aspartate(out) + sulfate(in). It catalyses the reaction L-aspartate(in) + sulfate(out) = L-aspartate(out) + sulfate(in). The enzyme catalyses sulfate(in) = sulfate(out). The catalysed reaction is phosphate(in) = phosphate(out). It carries out the reaction (S)-malate(out) = (S)-malate(in). With respect to regulation, increased activity at pH 6.0. sulfate/sulfate exchange activity is inhibited strongly by pyridoxal 5'-phosphate, bathophenanthroline and the organic mercurials mersalyl, p-chloromercuribenzoate and HgCl2. Antiporter that transports inorganic anions (sulfate, sulfite, thiosulfate and phosphate) and, to a lesser extent, a variety of dicarboxylates (e.g. malonate, malate and citramalate) and, even more so, aspartate. The sulfate/sulfate exchange is much higher than the phosphate/phosphate and malate/malate exchanges. The transport affinities is higher for sulfate and thiosulfate than for any other substrate. May catalyze the export of sulfite and thiosulfate (the hydrogen sulfide degradation products) from the mitochondria, thereby modulating the level of the hydrogen sulfide. Also may mediate a very low unidirectional transport of sulfate, phosphate and (S)-malate. In Homo sapiens (Human), this protein is Kidney mitochondrial carrier protein 1.